A 345-amino-acid polypeptide reads, in one-letter code: MFTSTGSSGLYKAPLSKSLLLVPSALSLLLTLLLPHCQKFFVYDLHAVKHDLQIWRLICGRIICLDLKDAFCSGLLIYNFRIFERRYGSRKFASFLLGSWVLSALFDFILVEAVQYSLGVTVASNLPSGFLAPVFALFVPFHCSIPRVQVAQILGPLSITNKTLIYILGLQLFTSGSYIWIVAMSGLISGMCYDRKVLQVHQVLRIPGRMAEFFSWALEPIFSSSEPTSEARVGMGATVDIQRQQRMEQLDRQLMLSQFAQVRRQRQQQGGMINWNRLFPPLRQRRNINYQDGPRSEQRASPPLEVSEEQVARLMEMGFSRGDALEALRASNNDLNVATNFLLQH.

The signal sequence occupies residues 1–39; sequence MFTSTGSSGLYKAPLSKSLLLVPSALSLLLTLLLPHCQK. At 40–91 the chain is on the extracellular side; it reads FFVYDLHAVKHDLQIWRLICGRIICLDLKDAFCSGLLIYNFRIFERRYGSRK. The helical transmembrane segment at 92-112 threads the bilayer; sequence FASFLLGSWVLSALFDFILVE. The Cytoplasmic portion of the chain corresponds to 113-125; that stretch reads AVQYSLGVTVASN. The chain crosses the membrane as a helical span at residues 126-146; the sequence is LPSGFLAPVFALFVPFHCSIP. Over 147–163 the chain is Extracellular; the sequence is RVQVAQILGPLSITNKT. Asn161 is a glycosylation site (N-linked (GlcNAc...) asparagine). The chain crosses the membrane as a helical span at residues 164 to 184; it reads LIYILGLQLFTSGSYIWIVAM. Residues 185–345 lie on the Cytoplasmic side of the membrane; sequence SGLISGMCYD…NVATNFLLQH (161 aa). The interval 287-306 is disordered; the sequence is NINYQDGPRSEQRASPPLEV. The region spanning 305–345 is the UBA domain; it reads EVSEEQVARLMEMGFSRGDALEALRASNNDLNVATNFLLQH.

Interacts with LMBR1L, FAF2, AMFR and VCP.

Its subcellular location is the endoplasmic reticulum membrane. In terms of biological role, restricts trafficking of FAF2 from the endoplasmic reticulum to lipid droplets. In association with LMBR1L and E3 ubiquitin-protein ligase AMFR, negatively regulates the canonical Wnt signaling pathway in the lymphocytes by promoting the ubiquitin-mediated degradation of CTNNB1 and Wnt receptors FZD6 and LRP6. The polypeptide is Ubiquitin-associated domain-containing protein 2 (Ubac2) (Mus musculus (Mouse)).